We begin with the raw amino-acid sequence, 775 residues long: Tumor necrosis factor alpha-induced protein 3 (775 aa).

At A2 the chain carries N-acetylalanine. A TRAF-binding region spans residues 58–300; the sequence is PQFREIIHKA…LTDPENEMKE (243 aa). In terms of domain architecture, OTU spans 92–263; the sequence is LVALKTNGDG…SQHFVPLVTL (172 aa). D100 is an active-site residue. The active-site Nucleophile is the C103. Interaction with ubiquitin stretches follow at residues 157 to 159, 190 to 192, and 224 to 227; these read LCY, SLE, and FAPL. H256 (proton acceptor) is an active-site residue. Positions 369 to 775 are interaction with TNIP1; it reads AQNPLEPSTP…ECYQFKQMYG (407 aa). The A20-type 1 zinc finger occupies 381-416; the sequence is SLMDIKCETPNCPFFMSVNTQPLCHECSERRQKNQS. Positions 386-445 are interaction with RIPK1; that stretch reads KCETPNCPFFMSVNTQPLCHECSERRQKNQSKLPKLNSKLGPEGLPGVGLGSSNWSPEET. Residues C387, C392, C404, and C407 each contribute to the Zn(2+) site. The segment at 415-455 is disordered; that stretch reads QSKLPKLNSKLGPEGLPGVGLGSSNWSPEETAGGPHSAPPT. S451 is subject to Phosphoserine. 2 A20-type zinc fingers span residues 464-499 and 500-533; these read ETTA…NASH and TADP…AEPS. Zn(2+) is bound by residues C470, C475, C487, C490, C506, C509, C521, and C524. Residues 567–580 are compositionally biased toward polar residues; it reads TGNVSPSGCLSQAA. A disordered region spans residues 567–590; that stretch reads TGNVSPSGCLSQAARTPGDRAGTS. 4 A20-type zinc fingers span residues 586-621, 636-671, 695-730, and 741-775; these read RAGT…ENKQ, FQNN…NQRF, VASR…RVGS, and EPPK…QMYG. The required for proteasomal degradation of UBE2N and UBE2D3, TRAF6 deubiquitination, and TAX1BP1 interaction with UBE2N stretch occupies residues 590 to 640; sequence SKCRKAGCMYFGTPENKGFCTLCFIEYRENKQSVTASEKAGSPAPRFQNNV. The segment at 591–775 is sufficient for inhibitory activity of TNF-induced NF-kappa-B activity; sequence KCRKAGCMYF…ECYQFKQMYG (185 aa). 16 residues coordinate Zn(2+): C592, C597, C609, C612, C642, C647, C659, C662, C701, C706, C718, C721, C747, C752, C764, and C767. The interval 682-775 is required for lysosomal localization and for TRAF2 lysosomal degradation; that stretch reads RSSQHRDMPR…ECYQFKQMYG (94 aa).

The protein belongs to the peptidase C64 family. Homodimer. Interacts with TNIP1, TAX1BP1 and TRAF2. Interacts with RNF11, ITCH and TAX1BP1 only after TNF stimulation; these interaction are transient and they are lost after 1 hour of stimulation with TNF. Interacts with YWHAZ and YWHAH. Interacts with IKBKG; the interaction is induced by TNF stimulation and by polyubiquitin. Interacts with RIPK1. Interacts with UBE2N; the interaction requires TAX1BP1. Interacts with TRAF6. As to expression, found in most tissues during development. Strikingly high levels are found in lymphoid organs, including the thymus, spleen, and gut-associated lymphoid tissue. Constitutively expressed in immature and mature thymocyte subpopulations as well as in resting peripheral T-cells; activation of these leads to down-regulation.

Its subcellular location is the cytoplasm. The protein resides in the nucleus. It localises to the lysosome. The catalysed reaction is Thiol-dependent hydrolysis of ester, thioester, amide, peptide and isopeptide bonds formed by the C-terminal Gly of ubiquitin (a 76-residue protein attached to proteins as an intracellular targeting signal).. In terms of biological role, ubiquitin-editing enzyme that contains both ubiquitin ligase and deubiquitinase activities. Involved in immune and inflammatory responses signaled by cytokines, such as TNF-alpha and IL-1 beta, or pathogens via Toll-like receptors (TLRs) through terminating NF-kappa-B activity. Essential component of a ubiquitin-editing protein complex, comprising also RNF11, ITCH and TAX1BP1, that ensures the transient nature of inflammatory signaling pathways. In cooperation with TAX1BP1 promotes disassembly of E2-E3 ubiquitin protein ligase complexes in IL-1R and TNFR-1 pathways; affected are at least E3 ligases TRAF6, TRAF2 and BIRC2, and E2 ubiquitin-conjugating enzymes UBE2N and UBE2D3. In cooperation with TAX1BP1 promotes ubiquitination of UBE2N and proteasomal degradation of UBE2N and UBE2D3. Upon TNF stimulation, deubiquitinates 'Lys-63'-polyubiquitin chains on RIPK1 and catalyzes the formation of 'Lys-48'-polyubiquitin chains. This leads to RIPK1 proteasomal degradation and consequently termination of the TNF- or LPS-mediated activation of NF-kappa-B. Deubiquitinates TRAF6 probably acting on 'Lys-63'-linked polyubiquitin. Upon T-cell receptor (TCR)-mediated T-cell activation, deubiquitinates 'Lys-63'-polyubiquitin chains on MALT1 thereby mediating disassociation of the CBM (CARD11:BCL10:MALT1) and IKK complexes and preventing sustained IKK activation. Deubiquitinates NEMO/IKBKG; the function is facilitated by TNIP1 and leads to inhibition of NF-kappa-B activation. Upon stimulation by bacterial peptidoglycans, probably deubiquitinates RIPK2. Can also inhibit I-kappa-B-kinase (IKK) through a non-catalytic mechanism which involves polyubiquitin; polyubiquitin promotes association with IKBKG and prevents IKK MAP3K7-mediated phosphorylation. Targets TRAF2 for lysosomal degradation. In vitro able to deubiquitinate 'Lys-11'-, 'Lys-48'- and 'Lys-63' polyubiquitin chains. Inhibitor of programmed cell death. Has a role in the function of the lymphoid system. Required for LPS-induced production of pro-inflammatory cytokines and IFN beta in LPS-tolerized macrophages. The chain is Tumor necrosis factor alpha-induced protein 3 (Tnfaip3) from Mus musculus (Mouse).